The chain runs to 160 residues: SsrA-binding protein (160 aa).

The segment at Lys-135–Gly-160 is disordered. A compositionally biased stretch (basic and acidic residues) spans Asp-138 to Gly-160.

It belongs to the SmpB family.

It is found in the cytoplasm. Required for rescue of stalled ribosomes mediated by trans-translation. Binds to transfer-messenger RNA (tmRNA), required for stable association of tmRNA with ribosomes. tmRNA and SmpB together mimic tRNA shape, replacing the anticodon stem-loop with SmpB. tmRNA is encoded by the ssrA gene; the 2 termini fold to resemble tRNA(Ala) and it encodes a 'tag peptide', a short internal open reading frame. During trans-translation Ala-aminoacylated tmRNA acts like a tRNA, entering the A-site of stalled ribosomes, displacing the stalled mRNA. The ribosome then switches to translate the ORF on the tmRNA; the nascent peptide is terminated with the 'tag peptide' encoded by the tmRNA and targeted for degradation. The ribosome is freed to recommence translation, which seems to be the essential function of trans-translation. In Sphingomonas elodea, this protein is SsrA-binding protein.